Reading from the N-terminus, the 261-residue chain is Dienlactone hydrolase 1 (261 aa).

Catalysis depends on residues Cys147, Asp194, and His226.

The protein belongs to the dienelactone hydrolase family.

It functions in the pathway xenobiotic degradation. In terms of biological role, dienlactone hydrolase; part of the Fusarium detoxification of benzoxazolinone cluster 1 (FDB1) involved in the degradation of benzoxazolinones produced by the host plant. Maize, wheat, and rye produce the 2 benzoxazinone phytoanticipins 2,4-dihy-droxy-7-methoxy-1,4-benzoxazin-3-one (DIMBOA) and 2,4-dihydroxy-1,4-benzoxazin-3-one (DIBOA) that, due to their inherent instability once released, spontaneously degrade to the more stable corresponding benzoxazolinones, 6-methoxy-2-benzoxazolinone (MBOA) and 2-benzoxazolinone (BOA), respectively. The first step in the detoxification of benzoxazolinones involves the hydrolysis of the cyclic ester bond of benzoxazolinones by the FDB1 cluster gamma-lactamase MBL1 to aminophenols. MBL1 is able to convert BOA into 2-aminophenol (2-AP), as well as MBOA into 5-methoxy-2-aminophenol (2-AMP). The FDB2 cluster N-malonyltransferase FDB2/NAT1 then metabolizes aminophenols via N-malonylation to non-toxic malonamic acids. FDB2/NAT1 converts 2-AP into N-(2-hydroxyphenyl) malonamic acid (HPMA) and 2-AMP into N-(2-hydroxy-4-methoxyphenyl) malonamic acid (HMPMA). The duplicated dienlactone hydrolases DLH1 and DLH2 may provide redundant function for hydrolyzing the lactone moiety in the BOA molecule. The roles of the amidases and other enzymes encoded by the 2 FDB clusters have not been identified so far. This Gibberella moniliformis (strain M3125 / FGSC 7600) (Maize ear and stalk rot fungus) protein is Dienlactone hydrolase 1.